Here is a 271-residue protein sequence, read N- to C-terminus: Phosphate import ATP-binding protein PstB (271 aa).

The ABC transporter domain maps to phenylalanine 25–isoleucine 266. Glycine 57–serine 64 is an ATP binding site.

Belongs to the ABC transporter superfamily. Phosphate importer (TC 3.A.1.7) family. As to quaternary structure, the complex is composed of two ATP-binding proteins (PstB), two transmembrane proteins (PstC and PstA) and a solute-binding protein (PstS).

The protein localises to the cell membrane. It catalyses the reaction phosphate(out) + ATP + H2O = ADP + 2 phosphate(in) + H(+). Functionally, part of the ABC transporter complex PstSACB involved in phosphate import. Responsible for energy coupling to the transport system. The polypeptide is Phosphate import ATP-binding protein PstB (Bacillus cereus (strain ATCC 14579 / DSM 31 / CCUG 7414 / JCM 2152 / NBRC 15305 / NCIMB 9373 / NCTC 2599 / NRRL B-3711)).